The sequence spans 177 residues: Peptide methionine sulfoxide reductase MsrA (177 aa).

The active site involves C11.

Belongs to the MsrA Met sulfoxide reductase family.

It carries out the reaction L-methionyl-[protein] + [thioredoxin]-disulfide + H2O = L-methionyl-(S)-S-oxide-[protein] + [thioredoxin]-dithiol. The catalysed reaction is [thioredoxin]-disulfide + L-methionine + H2O = L-methionine (S)-S-oxide + [thioredoxin]-dithiol. Has an important function as a repair enzyme for proteins that have been inactivated by oxidation. Catalyzes the reversible oxidation-reduction of methionine sulfoxide in proteins to methionine. In Picrophilus torridus (strain ATCC 700027 / DSM 9790 / JCM 10055 / NBRC 100828 / KAW 2/3), this protein is Peptide methionine sulfoxide reductase MsrA.